Consider the following 350-residue polypeptide: Ferredoxin--NADP reductase (350 aa).

FAD-binding residues include threonine 22, glutamate 41, glutamine 49, tyrosine 54, valine 94, phenylalanine 129, aspartate 295, and serine 336.

Belongs to the ferredoxin--NADP reductase type 2 family. In terms of assembly, homodimer. The cofactor is FAD.

It carries out the reaction 2 reduced [2Fe-2S]-[ferredoxin] + NADP(+) + H(+) = 2 oxidized [2Fe-2S]-[ferredoxin] + NADPH. In Chlorobium luteolum (strain DSM 273 / BCRC 81028 / 2530) (Pelodictyon luteolum), this protein is Ferredoxin--NADP reductase.